Consider the following 345-residue polypeptide: Splicing factor YJU2 (345 aa).

Cys43, Cys46, Cys80, and Cys83 together coordinate Zn(2+). The segment at 205-345 (KRLRDSDSEE…YSDSDDSSSD (141 aa)) is disordered. Positions 217–232 (ENAKERSKKHIADKPT) are enriched in basic and acidic residues. 2 stretches are compositionally biased toward low complexity: residues 308-317 (SSITSSSASS) and 327-337 (GSSLGLLGAYS).

This sequence belongs to the CWC16 family. YJU2 subfamily. In terms of assembly, component of the spliceosome. Present in the activated B complex, the catalytically activated B* complex which catalyzes the branching, the catalytic step 1 C complex catalyzing the exon ligation, and the postcatalytic P complex containing the ligated exons (mRNA) and the excised lariat intron.

The protein resides in the nucleus. Its function is as follows. Part of the spliceosome which catalyzes two sequential transesterification reactions, first the excision of the non-coding intron from pre-mRNA and then the ligation of the coding exons to form the mature mRNA. Plays a role in stabilizing the structure of the spliceosome catalytic core and docking of the branch helix into the active site, producing 5'-exon and lariat intron-3'-intermediates. May protect cells from TP53-dependent apoptosis upon dsDNA break damage through association with PRP19-CD5L complex. The sequence is that of Splicing factor YJU2 from Danio rerio (Zebrafish).